We begin with the raw amino-acid sequence, 277 residues long: L-aspartate oxidase (277 aa).

Arg-23 (proton donor/acceptor) is an active-site residue. FAD is bound by residues Glu-106 and 122–123; that span reads SL. Disordered regions lie at residues 142 to 161 and 234 to 277; these read LRRG…PPPA and DYPA…ETRS. Positions 146 to 161 are enriched in pro residues; that stretch reads WPPPAPPDLSPRPPPA.

The protein belongs to the FAD-dependent oxidoreductase 2 family. NadB subfamily. FAD serves as cofactor.

Its subcellular location is the cytoplasm. It carries out the reaction L-aspartate + O2 = iminosuccinate + H2O2. It functions in the pathway cofactor biosynthesis; NAD(+) biosynthesis; iminoaspartate from L-aspartate (oxidase route): step 1/1. Catalyzes the oxidation of L-aspartate to iminoaspartate, the first step in the de novo biosynthesis of NAD(+). In Rhodospirillum rubrum, this protein is L-aspartate oxidase (nadB).